The chain runs to 469 residues: Light-independent protochlorophyllide reductase subunit N (469 aa).

Cys-24, Cys-49, and Cys-109 together coordinate [4Fe-4S] cluster.

The protein belongs to the BchN/ChlN family. In terms of assembly, protochlorophyllide reductase is composed of three subunits; ChlL, ChlN and ChlB. Forms a heterotetramer of two ChlB and two ChlN subunits. [4Fe-4S] cluster serves as cofactor.

The catalysed reaction is chlorophyllide a + oxidized 2[4Fe-4S]-[ferredoxin] + 2 ADP + 2 phosphate = protochlorophyllide a + reduced 2[4Fe-4S]-[ferredoxin] + 2 ATP + 2 H2O. Its pathway is porphyrin-containing compound metabolism; chlorophyll biosynthesis (light-independent). In terms of biological role, component of the dark-operative protochlorophyllide reductase (DPOR) that uses Mg-ATP and reduced ferredoxin to reduce ring D of protochlorophyllide (Pchlide) to form chlorophyllide a (Chlide). This reaction is light-independent. The NB-protein (ChlN-ChlB) is the catalytic component of the complex. The sequence is that of Light-independent protochlorophyllide reductase subunit N from Gloeobacter violaceus (strain ATCC 29082 / PCC 7421).